A 218-amino-acid polypeptide reads, in one-letter code: Small ribosomal subunit protein uS3c (218 aa).

The region spanning 47 to 117 (VRTHIRNSSN…KLKITLSEID (71 aa)) is the KH type-2 domain.

This sequence belongs to the universal ribosomal protein uS3 family. Part of the 30S ribosomal subunit.

The protein resides in the plastid. Its subcellular location is the chloroplast. The protein is Small ribosomal subunit protein uS3c (rps3) of Spirogyra maxima (Green alga).